A 1273-amino-acid polypeptide reads, in one-letter code: Inverted formin-2 (1273 aa).

5 disordered regions span residues 1–30 (MSVK…EANL), 346–387 (GRPR…GQQP), 427–559 (LSSS…PLPG), 960–999 (NKDR…GPGK), and 1021–1273 (KTAR…CVIQ). Residue serine 2 is modified to N-acetylserine. The region spanning 2–330 (SVKEGAQRKW…RAVLLASDAQ (329 aa)) is the GBD/FH3 domain. Serine 351 bears the Phosphoserine mark. Residues 359–382 (SVQTNSVQNQGSSSQNTTTPTTKV) show a composition bias toward low complexity. Residues 421-564 (PLPTPPLSSS…PPLPGFSVPS (144 aa)) enclose the FH1 domain. Pro residues-rich tracts occupy residues 433–516 (VLPP…PLPS) and 524–558 (QPPP…PPLP). Residues 589–979 (HRRVNPPTLR…AERRKQQLAE (391 aa)) form the FH2 domain. Positions 907–984 (EASQELDKVF…QQLAEEEARR (78 aa)) form a coiled coil. The 16-residue stretch at 1007-1022 (DALLADIRKGFQLRKT) folds into the WH2 domain. Residues 1047-1059 (ATASNPTQGTNHP) show a composition bias toward polar residues. The segment covering 1088-1101 (SKEEDGPPALERRS) has biased composition (basic and acidic residues). Phosphoserine occurs at positions 1172 and 1174. A compositionally biased stretch (acidic residues) spans 1195 to 1204 (GEDEDGEDTA). Residue threonine 1203 is modified to Phosphothreonine. A phosphoserine mark is found at serine 1216 and serine 1218. A phosphothreonine mark is found at threonine 1223 and threonine 1230. A compositionally biased stretch (basic residues) spans 1242–1251 (TSKRRKKRPS).

It belongs to the formin homology family. As to quaternary structure, interacts with profilin and actin at the FH1 and FH2 domains respectively. Interacts with DAAM2.

The protein resides in the cytoplasm. Its subcellular location is the perinuclear region. With respect to regulation, phosphate inhibits both the depolymerization and severing activities. Functionally, severs actin filaments and accelerates their polymerization and depolymerization. The sequence is that of Inverted formin-2 (Inf2) from Mus musculus (Mouse).